The sequence spans 119 residues: MSIDMKKKHRIKKNDEFQAVFQKGKSNANRQFVVYQLDKEEQPNFRIGLSVSKKIGNAVVRNRIKRMVRQAITELKDEIASGKDFVIIARKPCAEMTYEEVKKSLIHVFKRSGMKRIKK.

The protein belongs to the RnpA family. Consists of a catalytic RNA component (M1 or rnpB) and a protein subunit.

It catalyses the reaction Endonucleolytic cleavage of RNA, removing 5'-extranucleotides from tRNA precursor.. In terms of biological role, RNaseP catalyzes the removal of the 5'-leader sequence from pre-tRNA to produce the mature 5'-terminus. It can also cleave other RNA substrates such as 4.5S RNA. The protein component plays an auxiliary but essential role in vivo by binding to the 5'-leader sequence and broadening the substrate specificity of the ribozyme. In Bacillus cereus (strain ATCC 14579 / DSM 31 / CCUG 7414 / JCM 2152 / NBRC 15305 / NCIMB 9373 / NCTC 2599 / NRRL B-3711), this protein is Ribonuclease P protein component.